The sequence spans 101 residues: Small ribosomal subunit protein uS14 (101 aa).

The protein belongs to the universal ribosomal protein uS14 family. Part of the 30S ribosomal subunit. Contacts proteins S3 and S10.

In terms of biological role, binds 16S rRNA, required for the assembly of 30S particles and may also be responsible for determining the conformation of the 16S rRNA at the A site. The chain is Small ribosomal subunit protein uS14 from Shewanella sediminis (strain HAW-EB3).